A 724-amino-acid chain; its full sequence is Catalase-peroxidase (724 aa).

A cross-link (tryptophyl-tyrosyl-methioninium (Trp-Tyr) (with M-252)) is located at residues 98 to 226; that stretch reads WHSAGTYRIA…LATVMMGLIY (129 aa). His-99 serves as the catalytic Proton acceptor. Residues 226–252 constitute a cross-link (tryptophyl-tyrosyl-methioninium (Tyr-Met) (with W-98)); the sequence is YVNPEGVDGNPDPLKTAQDMRVTFARM. His-267 lines the heme b pocket.

This sequence belongs to the peroxidase family. Peroxidase/catalase subfamily. As to quaternary structure, homodimer or homotetramer. Requires heme b as cofactor. Formation of the three residue Trp-Tyr-Met cross-link is important for the catalase, but not the peroxidase activity of the enzyme.

The enzyme catalyses H2O2 + AH2 = A + 2 H2O. It catalyses the reaction 2 H2O2 = O2 + 2 H2O. Functionally, bifunctional enzyme with both catalase and broad-spectrum peroxidase activity. The chain is Catalase-peroxidase from Vibrio cholerae serotype O1 (strain ATCC 39541 / Classical Ogawa 395 / O395).